Reading from the N-terminus, the 272-residue chain is Phosphoglycolate phosphatase (272 aa).

Residue Asp-19 is the Nucleophile of the active site. The Mg(2+) site is built by Asp-19, Asp-21, and Asp-182.

Belongs to the HAD-like hydrolase superfamily. CbbY/CbbZ/Gph/YieH family. Mg(2+) is required as a cofactor.

It carries out the reaction 2-phosphoglycolate + H2O = glycolate + phosphate. The protein operates within organic acid metabolism; glycolate biosynthesis; glycolate from 2-phosphoglycolate: step 1/1. In terms of biological role, specifically catalyzes the dephosphorylation of 2-phosphoglycolate. Is involved in the dissimilation of the intracellular 2-phosphoglycolate formed during the DNA repair of 3'-phosphoglycolate ends, a major class of DNA lesions induced by oxidative stress. The polypeptide is Phosphoglycolate phosphatase (Pseudomonas syringae pv. tomato (strain ATCC BAA-871 / DC3000)).